A 119-amino-acid polypeptide reads, in one-letter code: Protein TusC (119 aa).

Belongs to the DsrF/TusC family. Heterohexamer, formed by a dimer of trimers. The hexameric TusBCD complex contains 2 copies each of TusB, TusC and TusD. The TusBCD complex interacts with TusE.

It localises to the cytoplasm. Part of a sulfur-relay system required for 2-thiolation of 5-methylaminomethyl-2-thiouridine (mnm(5)s(2)U) at tRNA wobble positions. This Cronobacter sakazakii (strain ATCC BAA-894) (Enterobacter sakazakii) protein is Protein TusC.